The sequence spans 72 residues: Putative DNA-directed RNA polymerase subunit omega (72 aa).

Belongs to the RNA polymerase subunit omega family.

It localises to the plastid. The protein localises to the chloroplast. The catalysed reaction is RNA(n) + a ribonucleoside 5'-triphosphate = RNA(n+1) + diphosphate. May be involved in RNA polymerase activity. The protein is Putative DNA-directed RNA polymerase subunit omega (rpoZ) of Cyanidium caldarium (Red alga).